Here is a 750-residue protein sequence, read N- to C-terminus: Photosystem I P700 chlorophyll a apoprotein A1 (750 aa).

Helical transmembrane passes span 70 to 93 (VFSA…FHGA), 156 to 179 (LYCT…FHYH), 195 to 219 (LNHH…HVSL), 291 to 309 (IVHH…GHMY), 346 to 369 (WHAQ…HHMY), 385 to 411 (LSLF…IFMV), 433 to 455 (AIIS…LYIH), and 531 to 549 (FLVH…LILL). [4Fe-4S] cluster contacts are provided by C573 and C582. Helical transmembrane passes span 589–610 (HVFL…HFSW) and 664–686 (LSAY…MFLF). H675 contributes to the chlorophyll a' binding site. The chlorophyll a site is built by M683 and Y691. W692 contributes to the phylloquinone binding site. The chain crosses the membrane as a helical span at residues 724–744 (AVGVTHYLLGGIATTWAFFLA).

This sequence belongs to the PsaA/PsaB family. The PsaA/B heterodimer binds the P700 chlorophyll special pair and subsequent electron acceptors. PSI consists of a core antenna complex that captures photons, and an electron transfer chain that converts photonic excitation into a charge separation. The eukaryotic PSI reaction center is composed of at least 11 subunits. P700 is a chlorophyll a/chlorophyll a' dimer, A0 is one or more chlorophyll a, A1 is one or both phylloquinones and FX is a shared 4Fe-4S iron-sulfur center. serves as cofactor.

It is found in the plastid. The protein resides in the chloroplast thylakoid membrane. It carries out the reaction reduced [plastocyanin] + hnu + oxidized [2Fe-2S]-[ferredoxin] = oxidized [plastocyanin] + reduced [2Fe-2S]-[ferredoxin]. In terms of biological role, psaA and PsaB bind P700, the primary electron donor of photosystem I (PSI), as well as the electron acceptors A0, A1 and FX. PSI is a plastocyanin-ferredoxin oxidoreductase, converting photonic excitation into a charge separation, which transfers an electron from the donor P700 chlorophyll pair to the spectroscopically characterized acceptors A0, A1, FX, FA and FB in turn. Oxidized P700 is reduced on the lumenal side of the thylakoid membrane by plastocyanin. The polypeptide is Photosystem I P700 chlorophyll a apoprotein A1 (Piper cenocladum (Ant piper)).